A 1758-amino-acid chain; its full sequence is RanBP2-like and GRIP domain-containing protein 3 (1758 aa).

Ser-21 carries the post-translational modification Phosphoserine. A TPR 1 repeat occupies 60–93 (PRAHRFLGLLYELEENTEKAVECYRRSVELNPTQ). The stretch at 176–229 (RSTKRLKDAVARCHEAERNIALRSSLEWNSCVVQTLKEYLESLQCLESDKSDWR) forms a coiled coil. Residues 584–617 (QKMGSGLNSFYDQREYIGRSVHYWKKVLPLLKII) form a TPR 2 repeat. The disordered stretch occupies residues 761–805 (GPLYKNGSLRNADSEIKHSTPSPTKYSLSPSKSYKYSPKTPPRWA). Over residues 779–798 (STPSPTKYSLSPSKSYKYSP) the composition is skewed to low complexity. Residues 805 to 837 (AEDQNSLLKMIRQEVKAIKEEMQELKLNSSKSA) are a coiled coil. The RanBD1 1 domain maps to 1037–1173 (HFEPVVQMPE…FEECQRLLLD (137 aa)). Disordered stretches follow at residues 1216–1248 (VAEEENKGSGTGAAGASDTTIKPNAENTGPTLE), 1307–1335 (AKLNQSGTSVGTDEESDVTQEEERDGQYF), and 1581–1622 (NNSE…KNLS). The segment covering 1236–1245 (IKPNAENTGP) has biased composition (polar residues). Over residues 1318–1330 (TDEESDVTQEEER) the composition is skewed to acidic residues. The region spanning 1334–1470 (YFEPVVPLPD…FDEAKTAQEK (137 aa)) is the RanBD1 2 domain. Polar residues predominate over residues 1581–1594 (NNSETSSVAQSGSE). Basic and acidic residues predominate over residues 1595 to 1618 (SKVEPKKCELSKNSDIEQSSDSKV). One can recognise a GRIP domain in the interval 1703-1753 (QEVSAANVEHLKNVLLQFIFLKPGSERERLLPVINTMLQLSLEEKGKLAAV).

The sequence is that of RanBP2-like and GRIP domain-containing protein 3 (RGPD3) from Homo sapiens (Human).